The chain runs to 429 residues: Enolase (429 aa).

Q163 lines the (2R)-2-phosphoglycerate pocket. The Proton donor role is filled by E205. Positions 242, 285, and 312 each coordinate Mg(2+). Positions 337, 366, 367, and 388 each coordinate (2R)-2-phosphoglycerate. The active-site Proton acceptor is the K337.

This sequence belongs to the enolase family. Component of the RNA degradosome, a multiprotein complex involved in RNA processing and mRNA degradation. The cofactor is Mg(2+).

It localises to the cytoplasm. It is found in the secreted. The protein resides in the cell surface. It catalyses the reaction (2R)-2-phosphoglycerate = phosphoenolpyruvate + H2O. Its pathway is carbohydrate degradation; glycolysis; pyruvate from D-glyceraldehyde 3-phosphate: step 4/5. In terms of biological role, catalyzes the reversible conversion of 2-phosphoglycerate (2-PG) into phosphoenolpyruvate (PEP). It is essential for the degradation of carbohydrates via glycolysis. In Alkalilimnicola ehrlichii (strain ATCC BAA-1101 / DSM 17681 / MLHE-1), this protein is Enolase.